Here is a 591-residue protein sequence, read N- to C-terminus: 4-coumarate--CoA ligase-like 3 (591 aa).

Residues Ser-228, Ser-229, Gly-230, Thr-231, Ser-232, and Lys-236 each contribute to the ATP site. (E)-4-coumaroyl-AMP is bound at residue Tyr-280. Arg-301 is a binding site for CoA. The segment at Asp-303–Gln-375 is SBD1. Ala-353, Gln-375, Gly-376, and Thr-380 together coordinate (E)-4-coumaroyl-AMP. ATP is bound by residues Gln-375, Gly-376, Thr-380, Asp-459, and Arg-474. Residues Gly-376–Tyr-440 form an SBD2 region. Lys-476 and Lys-480 together coordinate (E)-4-coumaroyl-AMP. 2 residues coordinate CoA: Lys-482 and Gly-483. Lys-565 provides a ligand contact to ATP.

Belongs to the ATP-dependent AMP-binding enzyme family. The cofactor is Mg(2+).

It carries out the reaction (E)-4-coumarate + ATP + CoA = (E)-4-coumaroyl-CoA + AMP + diphosphate. The enzyme catalyses (E)-4-coumarate + ATP + H(+) = (E)-4-coumaroyl-AMP + diphosphate. It catalyses the reaction (E)-4-coumaroyl-AMP + CoA = (E)-4-coumaroyl-CoA + AMP + H(+). Carboxylate--CoA ligase that may use 4-coumarate as substrate. Follows a two-step reaction mechanism, wherein the carboxylate substrate first undergoes adenylation by ATP, followed by a thioesterification in the presence of CoA to yield the final CoA thioester. This is 4-coumarate--CoA ligase-like 3 (4CLL3) from Oryza sativa subsp. japonica (Rice).